Here is a 1050-residue protein sequence, read N- to C-terminus: Atrial natriuretic peptide receptor 2 (1050 aa).

The signal sequence occupies residues 1 to 19 (MDLGHSLFVVFTCFLMARC). Over 20–460 (RTEIGKNITV…FCNEDQLPVL (441 aa)) the chain is Extracellular. N-linked (GlcNAc...) asparagine glycans are attached at residues asparagine 26 and asparagine 74. Cysteine 84 and cysteine 110 are oxidised to a cystine. N-linked (GlcNAc...) asparagine glycans are attached at residues asparagine 169, asparagine 203, asparagine 285, asparagine 352, asparagine 366, and asparagine 415. A disulfide bond links cysteine 236 and cysteine 339. Residues 461–481 (GIVAVGSGLALIIFGISSFLI) form a helical membrane-spanning segment. Residues 482 to 1050 (YRKLKLEKEL…LGEKTDVYVI (569 aa)) lie on the Cytoplasmic side of the membrane. A Protein kinase domain is found at 517 to 790 (SRLTISQRGS…PDFSYIKIFV (274 aa)). Residues 865-995 (TIYFSDIVGF…DTVNTASRME (131 aa)) enclose the Guanylate cyclase domain.

It belongs to the adenylyl cyclase class-4/guanylyl cyclase family. In terms of processing, phosphorylated. Phosphorylation of the protein kinase-like domain is required for full activation by CNP. Glycosylated. In terms of tissue distribution, high levels found in liver, atrium and gill. Moderate levels found in brain and ventricle, and low levels in esophageal sphincter, stomach, posterior intestine and kidney.

The protein resides in the cell membrane. The enzyme catalyses GTP = 3',5'-cyclic GMP + diphosphate. Its function is as follows. Receptor for the C-type natriuretic peptide NPPC/CNP hormone. Has guanylate cyclase activity upon binding of its ligand. May play a role in the regulation of skeletal growth. The polypeptide is Atrial natriuretic peptide receptor 2 (npr2) (Anguilla japonica (Japanese eel)).